We begin with the raw amino-acid sequence, 222 residues long: Putative thymidylate synthase (222 aa).

The active site involves Cys139.

This sequence belongs to the thymidylate synthase family. Archaeal-type ThyA subfamily. Monomer.

The protein resides in the cytoplasm. It participates in pyrimidine metabolism; dTTP biosynthesis. In terms of biological role, may catalyze the biosynthesis of dTMP using an unknown cosubstrate. In Methanocaldococcus jannaschii (strain ATCC 43067 / DSM 2661 / JAL-1 / JCM 10045 / NBRC 100440) (Methanococcus jannaschii), this protein is Putative thymidylate synthase.